The following is a 1761-amino-acid chain: Nonribosomal peptide synthetase 6 (1761 aa).

Positions E63–R468 are adenylation. The 76-residue stretch at E600–S675 folds into the Carrier 1 domain. S636 is modified (O-(pantetheine 4'-phosphoryl)serine). The tract at residues V712–D1135 is condensation 1. Carrier domains lie at S1169 to R1242 and S1237 to T1313. O-(pantetheine 4'-phosphoryl)serine occurs at positions 1203 and 1274. The tract at residues I1354–V1677 is condensation 2.

The protein belongs to the NRP synthetase family.

Its pathway is siderophore biosynthesis. In terms of biological role, nonribosomal peptide synthetase; part of the gene cluster that mediates the biosynthesis of hydroxamate-containing siderophores that play a critical role in virulence. Cochliobolus heterostrophus produces extracellular coprogen-type siderophores including coprogen, neocoprogen I and neocoprogen II, as well as the intracellular siderophore ferricrocin. The role of extracellular siderophores is to supply iron to the fungus during plant infection, and the intracellular ferricrocin is required for intracellular iron distribution and storage with a crucial role in ascus and ascospore development. SIDA2 catalyzes the conversion of L-ornithine to N(5)-hydroxyornithine, the first step in the biosynthesis of all hydroxamate-containing siderophores. The assembly of extracellular coprogen-type siderophores is then performed by the nonribosomal peptide synthetase (NRPS) NPS6 whereas the intracellular siderophore ferricrocin is assembled by NPS2. The chain is Nonribosomal peptide synthetase 6 from Cochliobolus heterostrophus (strain C4 / ATCC 48331 / race T) (Southern corn leaf blight fungus).